The primary structure comprises 285 residues: TATA box-binding protein-associated factor RNA polymerase I subunit D (285 aa).

2 disordered regions span residues 1-49 (MAQS…RIPT) and 85-112 (KKKRKKRKKRKYKPKLRRQGRPSGTRNI). A compositionally biased stretch (polar residues) spans 21-39 (GNQSDDSSNSSLFKTQCVP). The residue at position 24 (Ser-24) is a Phosphoserine. A compositionally biased stretch (basic residues) spans 85 to 104 (KKKRKKRKKRKYKPKLRRQG). Residue Ser-134 is modified to Phosphoserine. The interval 193 to 219 (HKYMDDDGPLSPIEEPSTEDEATDPQS) is disordered. A Phosphoserine modification is found at Ser-229. Composition is skewed to basic and acidic residues over residues 242–264 (NLEQGKIKKESAFSKKSKAKDAT) and 273–285 (KGGEHACLHSEVS). The disordered stretch occupies residues 242-285 (NLEQGKIKKESAFSKKSKAKDATQRGNRRSWKGGEHACLHSEVS).

In terms of assembly, component of the transcription factor SL1/TIF-IB complex, composed of TBP and at least TAF1A, TAF1B, TAF1C and TAF1D. Interacts with UBTF.

It localises to the nucleus. Functionally, component of the transcription factor SL1/TIF-IB complex, which is involved in the assembly of the PIC (preinitiation complex) during RNA polymerase I-dependent transcription. The rate of PIC formation probably is primarily dependent on the rate of association of SL1/TIF-IB with the rDNA promoter. SL1/TIF-IB is involved in stabilization of nucleolar transcription factor 1/UBTF on rDNA. Formation of SL1/TIF-IB excludes the association of TBP with TFIID subunits. This chain is TATA box-binding protein-associated factor RNA polymerase I subunit D (Taf1d), found in Rattus norvegicus (Rat).